We begin with the raw amino-acid sequence, 999 residues long: Lysosomal alpha-mannosidase (999 aa).

The disordered stretch occupies residues 1–25 (MVGDARPSGVRAGGCRGAVGSRTSS). Positions 1–50 (MVGDARPSGVRAGGCRGAVGSRTSSRALRPPLPPLSSLFVLFLAAPCAWA) are cleaved as a signal peptide. The Zn(2+) site is built by H73 and D75. A glycan (N-linked (GlcNAc...) asparagine) is linked at N134. Position 197 (D197) interacts with Zn(2+). Residue D197 is the Nucleophile of the active site. An intrachain disulfide couples C269 to C274. N369 carries an N-linked (GlcNAc...) asparagine glycan. H448 lines the Zn(2+) pocket. C495 and C503 are disulfide-bonded. N499 is a glycosylation site (N-linked (GlcNAc...) asparagine). The propeptide occupies 591–621 (SRDLVIQNEYLRARFDPNTGLLMELENLEQN). 5 N-linked (GlcNAc...) asparagine glycosylation sites follow: N634, N640, N681, N755, and N919.

This sequence belongs to the glycosyl hydrolase 38 family. Homodimer. Zn(2+) serves as cofactor. In terms of processing, processed into 5 peptides of 35/38 kDa (A), 11/13 kDa (B) and 22 kDa (C), 38 kDa (D) and 13/15 kDa (E). The A, B and C peptides are disulfide-linked into a 67 kDa complex. Heavily glycosylated. Some sugar chains are of the high-mannose type.

The protein localises to the lysosome. The catalysed reaction is Hydrolysis of terminal, non-reducing alpha-D-mannose residues in alpha-D-mannosides.. Necessary for the catabolism of N-linked carbohydrates released during glycoprotein turnover. In Bos taurus (Bovine), this protein is Lysosomal alpha-mannosidase (MAN2B1).